Here is a 66-residue protein sequence, read N- to C-terminus: Cell division protein FtsB (66 aa).

Residues 1–3 (MKM) are Cytoplasmic-facing. The helical transmembrane segment at 4–21 (LKIFLLFLLFWLQCSLWI) threads the bilayer. The Extracellular portion of the chain corresponds to 22–66 (GKNGILDYIKIYKKIIVQKKKNEDFQIRNNQLILEIERLNNAIKN). A coiled-coil region spans residues 38 to 66 (VQKKKNEDFQIRNNQLILEIERLNNAIKN).

The protein belongs to the FtsB family.

The protein localises to the cell membrane. In terms of biological role, essential cell division protein. May link together the upstream cell division proteins, which are predominantly cytoplasmic, with the downstream cell division proteins, which are predominantly extracellular. The protein is Cell division protein FtsB of Buchnera aphidicola subsp. Schizaphis graminum (strain Sg).